The following is a 194-amino-acid chain: Adenylate kinase (194 aa).

ATP is bound at residue 10-15; sequence GAGKGT. Positions 30 to 59 are NMP; it reads STGDMLRAAVAQQSEIGKRAKAVMDAGQLV. Residues Thr-31, Arg-36, 57–59, 85–88, and Gln-92 contribute to the AMP site; these read QLV and GYPR. An LID region spans residues 126-142; the sequence is SRVAETIAKGGQVRSDD. Arg-127 is an ATP binding site. Residues Arg-139 and Arg-150 each coordinate AMP. ATP is bound at residue Ala-178.

The protein belongs to the adenylate kinase family. Monomer.

It localises to the cytoplasm. The catalysed reaction is AMP + ATP = 2 ADP. It participates in purine metabolism; AMP biosynthesis via salvage pathway; AMP from ADP: step 1/1. Functionally, catalyzes the reversible transfer of the terminal phosphate group between ATP and AMP. Plays an important role in cellular energy homeostasis and in adenine nucleotide metabolism. The polypeptide is Adenylate kinase (Brucella abortus (strain S19)).